A 100-amino-acid chain; its full sequence is Nucleoid-associated protein Rcas_2292 (100 aa).

Belongs to the YbaB/EbfC family. In terms of assembly, homodimer.

The protein localises to the cytoplasm. The protein resides in the nucleoid. In terms of biological role, binds to DNA and alters its conformation. May be involved in regulation of gene expression, nucleoid organization and DNA protection. This is Nucleoid-associated protein Rcas_2292 from Roseiflexus castenholzii (strain DSM 13941 / HLO8).